Reading from the N-terminus, the 612-residue chain is DNA mismatch repair protein MutL (612 aa).

The protein belongs to the DNA mismatch repair MutL/HexB family.

Its function is as follows. This protein is involved in the repair of mismatches in DNA. It is required for dam-dependent methyl-directed DNA mismatch repair. May act as a 'molecular matchmaker', a protein that promotes the formation of a stable complex between two or more DNA-binding proteins in an ATP-dependent manner without itself being part of a final effector complex. This chain is DNA mismatch repair protein MutL, found in Bartonella quintana (strain Toulouse) (Rochalimaea quintana).